The sequence spans 468 residues: ATP synthase subunit beta (468 aa).

ATP is bound at residue 155 to 162 (GGAGVGKT).

The protein belongs to the ATPase alpha/beta chains family. As to quaternary structure, F-type ATPases have 2 components, CF(1) - the catalytic core - and CF(0) - the membrane proton channel. CF(1) has five subunits: alpha(3), beta(3), gamma(1), delta(1), epsilon(1). CF(0) has three main subunits: a(1), b(2) and c(9-12). The alpha and beta chains form an alternating ring which encloses part of the gamma chain. CF(1) is attached to CF(0) by a central stalk formed by the gamma and epsilon chains, while a peripheral stalk is formed by the delta and b chains.

It is found in the cell membrane. The enzyme catalyses ATP + H2O + 4 H(+)(in) = ADP + phosphate + 5 H(+)(out). Produces ATP from ADP in the presence of a proton gradient across the membrane. The catalytic sites are hosted primarily by the beta subunits. This is ATP synthase subunit beta from Streptococcus pneumoniae serotype 19F (strain G54).